A 571-amino-acid chain; its full sequence is UvrABC system protein C (571 aa).

In terms of domain architecture, GIY-YIG spans 15–93 (TSPGVYLWKD…VDRFNPEFNI (79 aa)). The UVR domain maps to 184–219 (NNYLNELTNKMHTAANNMQFELALFLRDGLTYLKKL).

It belongs to the UvrC family. Interacts with UvrB in an incision complex.

Its subcellular location is the cytoplasm. Functionally, the UvrABC repair system catalyzes the recognition and processing of DNA lesions. UvrC both incises the 5' and 3' sides of the lesion. The N-terminal half is responsible for the 3' incision and the C-terminal half is responsible for the 5' incision. The chain is UvrABC system protein C from Mycoplasmopsis agalactiae (strain NCTC 10123 / CIP 59.7 / PG2) (Mycoplasma agalactiae).